Consider the following 454-residue polypeptide: tRNA modification GTPase MnmE (454 aa).

(6S)-5-formyl-5,6,7,8-tetrahydrofolate is bound by residues Arg-23, Glu-80, and Lys-120. The TrmE-type G domain maps to 216 to 377; it reads GMKVVIAGRP…LRNHLKQSMG (162 aa). A K(+)-binding site is contributed by Asn-226. GTP-binding positions include 226–231, 245–251, 270–273, 335–338, and 358–360; these read NAGKSS, TDIAGTT, DTAG, NKAD, and SAR. Ser-230 serves as a coordination point for Mg(2+). The K(+) site is built by Thr-245, Ile-247, and Thr-250. Residue Thr-251 participates in Mg(2+) binding. Lys-454 contributes to the (6S)-5-formyl-5,6,7,8-tetrahydrofolate binding site.

This sequence belongs to the TRAFAC class TrmE-Era-EngA-EngB-Septin-like GTPase superfamily. TrmE GTPase family. In terms of assembly, homodimer. Heterotetramer of two MnmE and two MnmG subunits. It depends on K(+) as a cofactor.

It localises to the cytoplasm. Functionally, exhibits a very high intrinsic GTPase hydrolysis rate. Involved in the addition of a carboxymethylaminomethyl (cmnm) group at the wobble position (U34) of certain tRNAs, forming tRNA-cmnm(5)s(2)U34. This chain is tRNA modification GTPase MnmE, found in Salmonella typhi.